The primary structure comprises 367 residues: MMMTAIGLMSGTSLDGVDVALIKTDGRRVGALGPSGYRPYTETERSLLRQALAEAVQLTARDARPGVLAEAERAVTIAHAEAVAAFVAQNRLSPGSVDIVGFHGQTVLHRPAEKLTVQIGDAKALAKAIRIPVVCDFRAADVAAGGQGAPLVPVYHRALAQSLGRDGPIGVINVGGVSNVTYIDGTDTLIACDTGPGNALLDDFMFRTLGKPFDCEGRLASQGVIDQAWLTEALQHPFFAKPTPKSLDRNDFANLTLRDWSPADGAATLTAFTARAIAAVQPLLPKPPQSWIVTGGGARNLTLMRMLREALAPASVESADALGWSADAMEAQAFGFLATRGLKGLPLSYPATTGVAFPMTGGLLARP.

11 to 18 (GTSLDGVD) is a binding site for ATP.

The protein belongs to the anhydro-N-acetylmuramic acid kinase family.

The catalysed reaction is 1,6-anhydro-N-acetyl-beta-muramate + ATP + H2O = N-acetyl-D-muramate 6-phosphate + ADP + H(+). It participates in amino-sugar metabolism; 1,6-anhydro-N-acetylmuramate degradation. It functions in the pathway cell wall biogenesis; peptidoglycan recycling. Functionally, catalyzes the specific phosphorylation of 1,6-anhydro-N-acetylmuramic acid (anhMurNAc) with the simultaneous cleavage of the 1,6-anhydro ring, generating MurNAc-6-P. Is required for the utilization of anhMurNAc either imported from the medium or derived from its own cell wall murein, and thus plays a role in cell wall recycling. This chain is Anhydro-N-acetylmuramic acid kinase, found in Rhodopseudomonas palustris (strain ATCC BAA-98 / CGA009).